A 389-amino-acid polypeptide reads, in one-letter code: Succinate--CoA ligase [ADP-forming] subunit beta (389 aa).

The region spanning 9 to 236 is the ATP-grasp domain; it reads RDMFEAHGVP…KDAADPLEAK (228 aa). Residues Lys45, 52-54, Ala94, and Glu99 contribute to the ATP site; that span reads GRG. 2 residues coordinate Mg(2+): Asn191 and Asp205. Substrate-binding positions include Asn256 and 318 to 320; that span reads GIT.

This sequence belongs to the succinate/malate CoA ligase beta subunit family. As to quaternary structure, heterotetramer of two alpha and two beta subunits. It depends on Mg(2+) as a cofactor.

The catalysed reaction is succinate + ATP + CoA = succinyl-CoA + ADP + phosphate. It carries out the reaction GTP + succinate + CoA = succinyl-CoA + GDP + phosphate. It functions in the pathway carbohydrate metabolism; tricarboxylic acid cycle; succinate from succinyl-CoA (ligase route): step 1/1. Succinyl-CoA synthetase functions in the citric acid cycle (TCA), coupling the hydrolysis of succinyl-CoA to the synthesis of either ATP or GTP and thus represents the only step of substrate-level phosphorylation in the TCA. The beta subunit provides nucleotide specificity of the enzyme and binds the substrate succinate, while the binding sites for coenzyme A and phosphate are found in the alpha subunit. This chain is Succinate--CoA ligase [ADP-forming] subunit beta, found in Arthrobacter sp. (strain FB24).